A 99-amino-acid polypeptide reads, in one-letter code: MAVNPLDFLKNMSSVKNNIDNIKKEISKITVCGKAGSNIVAIEMDGEFNVKKVSINKEFFDDLDNDAFEQMIKSALNDAVSKVKEEIKLKTMGVLPFGM.

This sequence belongs to the YbaB/EbfC family. As to quaternary structure, homodimer.

It localises to the cytoplasm. The protein localises to the nucleoid. Its function is as follows. Binds to DNA and alters its conformation. May be involved in regulation of gene expression, nucleoid organization and DNA protection. The chain is Nucleoid-associated protein EbfC from Borreliella burgdorferi (strain ZS7) (Borrelia burgdorferi).